The sequence spans 185 residues: Ribosome-recycling factor (185 aa).

The protein belongs to the RRF family.

Its subcellular location is the cytoplasm. Responsible for the release of ribosomes from messenger RNA at the termination of protein biosynthesis. May increase the efficiency of translation by recycling ribosomes from one round of translation to another. The protein is Ribosome-recycling factor of Pectobacterium atrosepticum (strain SCRI 1043 / ATCC BAA-672) (Erwinia carotovora subsp. atroseptica).